Here is a 143-residue protein sequence, read N- to C-terminus: uncharacterized protein (143 aa).

This sequence to E.coli YifN.

This is an uncharacterized protein from Haemophilus influenzae (strain ATCC 51907 / DSM 11121 / KW20 / Rd).